The primary structure comprises 122 residues: NADPH-dependent 7-cyano-7-deazaguanine reductase (122 aa).

Cysteine 34 (thioimide intermediate) is an active-site residue. The active-site Proton donor is the aspartate 41. Substrate contacts are provided by residues 56–58 (VEL) and 75–76 (HE).

It belongs to the GTP cyclohydrolase I family. QueF type 1 subfamily.

Its subcellular location is the cytoplasm. The catalysed reaction is 7-aminomethyl-7-carbaguanine + 2 NADP(+) = 7-cyano-7-deazaguanine + 2 NADPH + 3 H(+). It functions in the pathway tRNA modification; tRNA-queuosine biosynthesis. Catalyzes the NADPH-dependent reduction of 7-cyano-7-deazaguanine (preQ0) to 7-aminomethyl-7-deazaguanine (preQ1). This Anaeromyxobacter dehalogenans (strain 2CP-1 / ATCC BAA-258) protein is NADPH-dependent 7-cyano-7-deazaguanine reductase.